Reading from the N-terminus, the 382-residue chain is Na(+)/H(+) antiporter NhaA 2 (382 aa).

The next 10 helical transmembrane spans lie at 11 to 31 (FSVP…LDPA), 45 to 65 (LSFH…IAAV), 91 to 111 (LGGV…VGLP), 116 to 136 (GWGI…RMVF), 145 to 165 (YLLL…ALFY), 171 to 191 (PVVA…WGLG), 197 to 214 (SYWP…IGLH), 287 to 307 (WLVL…FGLL), 324 to 344 (LLVA…VSGS), and 353 to 373 (AAAK…MLLG).

Belongs to the NhaA Na(+)/H(+) (TC 2.A.33) antiporter family.

The protein resides in the cell inner membrane. It catalyses the reaction Na(+)(in) + 2 H(+)(out) = Na(+)(out) + 2 H(+)(in). Functionally, na(+)/H(+) antiporter that extrudes sodium in exchange for external protons. The protein is Na(+)/H(+) antiporter NhaA 2 of Pelobacter propionicus (strain DSM 2379 / NBRC 103807 / OttBd1).